The primary structure comprises 483 residues: Rhamnulokinase (483 aa).

11 to 15 (ASSGR) is an ATP binding site. Residues glycine 79 and 234–236 (HDT) contribute to the substrate site. Aspartate 235 serves as the catalytic Proton acceptor. Threonine 257 contacts ATP. A substrate-binding site is contributed by asparagine 294. An ATP-binding site is contributed by glutamine 302. Residues cysteine 352 and cysteine 369 are joined by a disulfide bond. Glycine 401 is a binding site for ATP.

This sequence belongs to the rhamnulokinase family. The cofactor is Mg(2+).

The enzyme catalyses L-rhamnulose + ATP = L-rhamnulose 1-phosphate + ADP + H(+). It participates in carbohydrate degradation; L-rhamnose degradation; glycerone phosphate from L-rhamnose: step 2/3. Its function is as follows. Involved in the catabolism of L-rhamnose (6-deoxy-L-mannose). Catalyzes the transfer of the gamma-phosphate group from ATP to the 1-hydroxyl group of L-rhamnulose to yield L-rhamnulose 1-phosphate. This Listeria monocytogenes serotype 4b (strain F2365) protein is Rhamnulokinase.